A 683-amino-acid polypeptide reads, in one-letter code: E3 ubiquitin-protein ligase RNF103 (683 aa).

4 helical membrane passes run 6 to 26 (FFLL…EAIV), 326 to 346 (LFVL…FITQ), 366 to 386 (LLII…LDSF), and 411 to 431 (MFYT…GLLI). A compositionally biased stretch (acidic residues) spans 525 to 542 (EEMSESSQDTENDSDSDN). Positions 525–548 (EEMSESSQDTENDSDSDNMDTFSS) are disordered. An RING-type zinc finger spans residues 619 to 661 (CVVCLENFENGCLLMGLPCGHVFHQNCIVMWLAGGRHCCPVCR).

In terms of assembly, interacts with DERL1 and VCP. Highly expressed in the normal cerebellum but not in the cerebral cortex.

Its subcellular location is the endoplasmic reticulum membrane. It catalyses the reaction S-ubiquitinyl-[E2 ubiquitin-conjugating enzyme]-L-cysteine + [acceptor protein]-L-lysine = [E2 ubiquitin-conjugating enzyme]-L-cysteine + N(6)-ubiquitinyl-[acceptor protein]-L-lysine.. It functions in the pathway protein modification; protein ubiquitination. Acts as an E2-dependent E3 ubiquitin-protein ligase, probably involved in the ER-associated protein degradation pathway. This chain is E3 ubiquitin-protein ligase RNF103 (Rnf103), found in Mus musculus (Mouse).